Reading from the N-terminus, the 461-residue chain is MALWGGRFSQGADSRFKQFNDSLRFDYRLAEQDIQGSMAWAKALVKVGVLTADEQGKLQQAMEVLLASVQQDPQQILISDAEDIHSWVESALIAAVGDLGKKLHTGRSRNDQVATDLKLWCKAQGELLLGSITALQQGLVASARANQAAVLPGYTHLQRAQPVTYAHWALAYVEMLERDYSRLQDALKRLDTSPLGCGALAGTAYAIDREALALDMGFAGATRNSLDSVSDRDHVVELMHVASLSMTHLSRFAEDLIFYNTGEAGFVELSDAVTSGSSLMPQKKNPDALELIRGKTGRVVGAQMGMLMSLKALPLAYNKDMQEDKEGLFDALDTWHDCLDMAALVLIDLKVNGERTMAAAQGGYANATELADYLVAKGIPFREAHHIVGETVVYAIQVKKPLEELTIGEFQRFSPVIEFDVYPNLELEATLAKRVAKGGVAREQVEAALIAAETWLAKRAG.

This sequence belongs to the lyase 1 family. Argininosuccinate lyase subfamily.

It localises to the cytoplasm. The enzyme catalyses 2-(N(omega)-L-arginino)succinate = fumarate + L-arginine. Its pathway is amino-acid biosynthesis; L-arginine biosynthesis; L-arginine from L-ornithine and carbamoyl phosphate: step 3/3. The sequence is that of Argininosuccinate lyase from Aeromonas hydrophila subsp. hydrophila (strain ATCC 7966 / DSM 30187 / BCRC 13018 / CCUG 14551 / JCM 1027 / KCTC 2358 / NCIMB 9240 / NCTC 8049).